A 497-amino-acid polypeptide reads, in one-letter code: Galactose/methyl galactoside import ATP-binding protein MglA 1 (497 aa).

ABC transporter domains follow at residues 6-243 (LEMR…VGRD) and 256-494 (GKVR…VMSM). 38–45 (GENGAGKS) serves as a coordination point for ATP.

It belongs to the ABC transporter superfamily. Galactose/methyl galactoside importer (TC 3.A.1.2.3) family. As to quaternary structure, the complex is composed of one ATP-binding protein (MglA), two transmembrane proteins (MglC) and a solute-binding protein (MglB).

The protein resides in the cell inner membrane. The enzyme catalyses D-galactose(out) + ATP + H2O = D-galactose(in) + ADP + phosphate + H(+). It catalyses the reaction methyl beta-D-galactoside(out) + ATP + H2O = methyl beta-D-galactoside(in) + ADP + phosphate + H(+). In terms of biological role, part of the ABC transporter complex MglABC involved in galactose/methyl galactoside import. Responsible for energy coupling to the transport system. This chain is Galactose/methyl galactoside import ATP-binding protein MglA 1, found in Photobacterium profundum (strain SS9).